The following is a 185-amino-acid chain: Ribosome-recycling factor (185 aa).

Belongs to the RRF family.

It localises to the cytoplasm. Its function is as follows. Responsible for the release of ribosomes from messenger RNA at the termination of protein biosynthesis. May increase the efficiency of translation by recycling ribosomes from one round of translation to another. The chain is Ribosome-recycling factor from Bacillus mycoides (strain KBAB4) (Bacillus weihenstephanensis).